We begin with the raw amino-acid sequence, 91 residues long: Small ribosomal subunit protein uS19 (91 aa).

It belongs to the universal ribosomal protein uS19 family.

In terms of biological role, protein S19 forms a complex with S13 that binds strongly to the 16S ribosomal RNA. This chain is Small ribosomal subunit protein uS19, found in Trichodesmium erythraeum (strain IMS101).